Here is a 544-residue protein sequence, read N- to C-terminus: MSIFIGGAWPYANGSLHLGHIASLLPGDILARYYRAKGEHVLYVSGSDCNGTPITIRAKQEGVTVKEIADKYHEEFERCFRSLGFTYDCYTRTDSEHHHETVQKVFLRLLEEGYIYKKVVEQAYCETCTQFLPDRYVEGICPHCHEAARGDQCDACSAILDPLDLLEKKCKLCGSTPSVQETEHFYFALHKFQQQIKEAVEIAKQKGTWRDNAIQLTERYLKEGLQDRAVSRDLPIGVPIPVAGYEDKKIYVWIEAVTGYYSASKHWVEETGKDDQEFWDKEAKTYYVHGKDNIPFHSIIWPAVLLGIGEEAIPRHIVSNEYLTVEKRKLSTSKNWAVWVPDILERYNPDSIRYFLTVNAPENRDTDFSWREFIYSHNSELLGAYGNFVNRTLKFIEKYYGGTVPKGSIDVELKDKVEGLYKSVGEAIEQTKFKVALETIFDAVRFANKYFDEKQPWKQREDDPVSCEETIYNCVYLIANFAQLLEPFLPFSSERVRNTLSSVKVNWEPQNTLPNRIDNVQPLFERIDVKQIEHEVEKLYGAVK.

The 'HIGH' region motif lies at 10–20 (PYANGSLHLGH). Residues Cys141, Cys144, Cys153, and Cys156 each contribute to the Zn(2+) site. The short motif at 329 to 333 (KLSTS) is the 'KMSKS' region element. ATP is bound at residue Thr332.

The protein belongs to the class-I aminoacyl-tRNA synthetase family. MetG type 1 subfamily. As to quaternary structure, monomer. The cofactor is Zn(2+).

The protein resides in the cytoplasm. It catalyses the reaction tRNA(Met) + L-methionine + ATP = L-methionyl-tRNA(Met) + AMP + diphosphate. Is required not only for elongation of protein synthesis but also for the initiation of all mRNA translation through initiator tRNA(fMet) aminoacylation. In Bacillus mycoides (strain KBAB4) (Bacillus weihenstephanensis), this protein is Methionine--tRNA ligase.